The chain runs to 237 residues: Small ribosomal subunit protein uS3 (237 aa).

Residues 17 to 86 (VERHLGHELK…SPQIEVQQVD (70 aa)) form the KH type-2 domain.

The protein belongs to the universal ribosomal protein uS3 family. In terms of assembly, part of the 30S ribosomal subunit.

In terms of biological role, binds the lower part of the 30S subunit head. The sequence is that of Small ribosomal subunit protein uS3 from Methanospirillum hungatei JF-1 (strain ATCC 27890 / DSM 864 / NBRC 100397 / JF-1).